The following is a 186-amino-acid chain: Thioredoxin M2, chloroplastic (186 aa).

A chloroplast-targeting transit peptide spans methionine 1–valine 72. In terms of domain architecture, Thioredoxin spans cysteine 73–proline 186. Active-site nucleophile residues include cysteine 110 and cysteine 113. Cysteine 110 and cysteine 113 are disulfide-bonded.

This sequence belongs to the thioredoxin family. Plant M-type subfamily. As to quaternary structure, interacts with G6PD1 and G6PD4. Interacts with PGL3.

The protein resides in the plastid. It is found in the chloroplast stroma. In terms of biological role, thiol-disulfide oxidoreductase that may participate in various redox reactions. May activate NADP-malate dehydrogenase. This Arabidopsis thaliana (Mouse-ear cress) protein is Thioredoxin M2, chloroplastic.